A 533-amino-acid polypeptide reads, in one-letter code: MIYGRSLFHIIASLIILHSSGATKKGTEKQITPETQKSVQCGTWTKHAEGGVFTSPNYPSKYPPDRECVYIIEAAPRQCIELYFDEKYSIEPSWECKFDHIEVRDGPFGFSPIIGRFCGQQNPPVIKSSGRFLWIKFFADGELESMGFSARYNFTPDPDFKDLGVLKPLPACEFEMGGPEGIVESIQILKEGKASASEAVDCKWYIRAPPRSKIYLRFLDYEMQNSNECKRNFVAVYDGSSSVEDLKAKFCSTVANDVMLRTGLGVIRMWADEGSRNSRFQMLFTSFQEPPCEGNTFFCHSNMCINNTLVCNGLQNCVYPWDENHCKEKRKTSLLDQLTNTSGTVIGVTSCIVIILIIVSVIVQIKQPRKKYVQRKSDFDQTVFQEVFEPPHYELCTLRGTGATADFADVAEDFENYHKLRRSSSKCIHDHHCGSQLSSAKGSRSNLSTRDASILAEIPTQPVKPLIPPVNRRNILVMKHNYSQDAADACDIDEIEEVPTTSHRLSRHEKSVQRFCLIGSLSKHESEYNTTRV.

The signal sequence occupies residues Met1–Ala22. At Thr23–Thr344 the chain is on the extracellular side. Intrachain disulfides connect Cys41-Cys68, Cys96-Cys118, Cys172-Cys202, Cys229-Cys251, Cys292-Cys304, Cys299-Cys317, and Cys311-Cys326. 2 consecutive CUB domains span residues Cys41–Thr155 and Cys172–Phe287. The 37-residue stretch at Pro291–Lys327 folds into the LDL-receptor class A domain. Asn306 carries an N-linked (GlcNAc...) asparagine glycan. A glycan (N-linked (GlcNAc...) asparagine) is linked at Asn340. The chain crosses the membrane as a helical span at residues Val345 to Ile365. Residues Lys366–Val533 lie on the Cytoplasmic side of the membrane. At Tyr417 the chain carries Phosphotyrosine. A PDZ-binding motif is present at residues Thr531–Val533.

Interacts with PLZ domains of DLG2, DLG3 and DLG4 via its C-terminal TRV domain. Interacts with GRIN2A and GRIN2B via its CUB domains. In terms of tissue distribution, expressed only in brain. Present throughout the central nervous system. Highly expressed in the hippocampal CA3 region, olfactory bulb and tubercle, caudate putamen, and neocortex in the adult brain.

It localises to the membrane. The protein resides in the postsynaptic density membrane. Involved in the development and/or maintenance of neuronal circuitry. Accessory subunit of the neuronal N-methyl-D-aspartate receptor (NMDAR) critical for maintaining the abundance of GRIN2A-containing NMDARs in the postsynaptic density. Regulates long-term NMDA receptor-dependent synaptic plasticity and cognition, at least in the context of spatial learning and memory. This Mus musculus (Mouse) protein is Neuropilin and tolloid-like protein 1 (Neto1).